A 901-amino-acid polypeptide reads, in one-letter code: HTH-type transcriptional regulator MalT (901 aa).

Residue 39-46 (SPAGYGKT) coordinates ATP. In terms of domain architecture, HTH luxR-type spans 829 to 894 (ELIRTSPLTQ…DAVQHAQQLL (66 aa)). The segment at residues 853 to 872 (NEQIAGELEVAATTIKTHIR) is a DNA-binding region (H-T-H motif).

This sequence belongs to the MalT family. In terms of assembly, monomer in solution. Oligomerizes to an active state in the presence of the positive effectors ATP and maltotriose.

Its activity is regulated as follows. Activated by ATP and maltotriose, which are both required for DNA binding. Functionally, positively regulates the transcription of the maltose regulon whose gene products are responsible for uptake and catabolism of malto-oligosaccharides. Specifically binds to the promoter region of its target genes, recognizing a short DNA motif called the MalT box. The polypeptide is HTH-type transcriptional regulator MalT (Escherichia fergusonii (strain ATCC 35469 / DSM 13698 / CCUG 18766 / IAM 14443 / JCM 21226 / LMG 7866 / NBRC 102419 / NCTC 12128 / CDC 0568-73)).